Consider the following 299-residue polypeptide: Ribosomal protein L11 methyltransferase (299 aa).

S-adenosyl-L-methionine is bound by residues T149, G170, D192, and N234.

Belongs to the methyltransferase superfamily. PrmA family.

The protein resides in the cytoplasm. It carries out the reaction L-lysyl-[protein] + 3 S-adenosyl-L-methionine = N(6),N(6),N(6)-trimethyl-L-lysyl-[protein] + 3 S-adenosyl-L-homocysteine + 3 H(+). Functionally, methylates ribosomal protein L11. This is Ribosomal protein L11 methyltransferase from Chromohalobacter salexigens (strain ATCC BAA-138 / DSM 3043 / CIP 106854 / NCIMB 13768 / 1H11).